A 463-amino-acid polypeptide reads, in one-letter code: Asparagine--tRNA ligase (463 aa).

This sequence belongs to the class-II aminoacyl-tRNA synthetase family. As to quaternary structure, homodimer.

It localises to the cytoplasm. It carries out the reaction tRNA(Asn) + L-asparagine + ATP = L-asparaginyl-tRNA(Asn) + AMP + diphosphate + H(+). This is Asparagine--tRNA ligase from Clostridium botulinum (strain Langeland / NCTC 10281 / Type F).